A 259-amino-acid chain; its full sequence is Probable ABC transporter permease protein RP096 (259 aa).

Helical transmembrane passes span 13–35 (TIKFAQSVGIFSLFSFIAISSII), 49–69 (LFIGFHSLPVVAMTTFFSGAV), 148–168 (VIAAIITMPCLVLIGDIIGVM), 195–215 (PIDVISGLIKATVFGFIISII), and 237–257 (AVVNSSILILISNYLITELFF).

It belongs to the MlaE permease family.

The protein resides in the cell inner membrane. Its function is as follows. Could be part of an ABC transporter complex. The chain is Probable ABC transporter permease protein RP096 from Rickettsia prowazekii (strain Madrid E).